The primary structure comprises 879 residues: Fanconi anemia core complex-associated protein 100 (879 aa).

As to quaternary structure, belongs to the multisubunit FA complex composed of FANCA, FANCB, FANCC, FANCE, FANCF, FANCG, FANCL/PHF9, FANCM, FAAP24 and FAAP100. Forms a subcomplex with FANCB and FANCL.

The protein resides in the nucleus. In terms of biological role, plays a role in Fanconi anemia-associated DNA damage response network. Regulates FANCD2 monoubiquitination and the stability of the FA core complex. Induces chromosomal instability as well as hypersensitivity to DNA cross-linking agents, when repressed. The polypeptide is Fanconi anemia core complex-associated protein 100 (Mus musculus (Mouse)).